Reading from the N-terminus, the 117-residue chain is Dolichyl-diphosphooligosaccharide--protein glycosyltransferase subunit DAD1 (117 aa).

Over 1–33 the chain is Cytoplasmic; sequence MAKTSSTTKDAQDLFHAIWSAYSATPTNLKIID. The chain crosses the membrane as a helical span at residues 34-54; it reads LYVVFAVFTALLQDVYMALVG. Residues 55-57 are Lumenal-facing; that stretch reads PFP. Residues 58–78 traverse the membrane as a helical segment; it reads FNSFLSGVLSCVGTAVLAVCL. Residues 79 to 96 are Cytoplasmic-facing; sequence RIQVNKENKEFKDLGPER. A helical membrane pass occupies residues 97 to 117; sequence AFADFVLCNLVLHLVIMNFLG.

This sequence belongs to the DAD/OST2 family. As to quaternary structure, component of the oligosaccharyltransferase (OST) complex.

The protein localises to the endoplasmic reticulum membrane. It functions in the pathway protein modification; protein glycosylation. In terms of biological role, subunit of the oligosaccharyl transferase (OST) complex that catalyzes the initial transfer of a defined glycan (Glc(3)Man(9)GlcNAc(2) in eukaryotes) from the lipid carrier dolichol-pyrophosphate to an asparagine residue within an Asn-X-Ser/Thr consensus motif in nascent polypeptide chains, the first step in protein N-glycosylation. N-glycosylation occurs cotranslationally and the complex associates with the Sec61 complex at the channel-forming translocon complex that mediates protein translocation across the endoplasmic reticulum (ER). All subunits are required for a maximal enzyme activity. This chain is Dolichyl-diphosphooligosaccharide--protein glycosyltransferase subunit DAD1 (DAD1), found in Pisum sativum (Garden pea).